Reading from the N-terminus, the 810-residue chain is Phenylalanine--tRNA ligase beta subunit (810 aa).

The tRNA-binding domain occupies 39–151 (RTWAAGVVVG…AGLQAGQPVG (113 aa)). Residues 408–494 (EPEHSITLRL…RLYGYDNFGE (87 aa)) enclose the B5 domain. Positions 472, 478, 481, and 482 each coordinate Mg(2+). One can recognise an FDX-ACB domain in the interval 716 to 809 (SSFPASDRDL…LVERFRVTLR (94 aa)).

It belongs to the phenylalanyl-tRNA synthetase beta subunit family. Type 1 subfamily. In terms of assembly, tetramer of two alpha and two beta subunits. It depends on Mg(2+) as a cofactor.

The protein localises to the cytoplasm. It carries out the reaction tRNA(Phe) + L-phenylalanine + ATP = L-phenylalanyl-tRNA(Phe) + AMP + diphosphate + H(+). This chain is Phenylalanine--tRNA ligase beta subunit (pheT), found in Synechococcus elongatus (strain ATCC 33912 / PCC 7942 / FACHB-805) (Anacystis nidulans R2).